Reading from the N-terminus, the 398-residue chain is LL-diaminopimelate aminotransferase (398 aa).

Y14 and G41 together coordinate substrate. Pyridoxal 5'-phosphate contacts are provided by residues Y71, A104–K105, Y128, N174, Y205, and S233–S235. Substrate-binding residues include K105, Y128, and N174. K236 bears the N6-(pyridoxal phosphate)lysine mark. Pyridoxal 5'-phosphate is bound by residues R244 and N275. Substrate contacts are provided by N275 and R368.

The protein belongs to the class-I pyridoxal-phosphate-dependent aminotransferase family. LL-diaminopimelate aminotransferase subfamily. In terms of assembly, homodimer. Requires pyridoxal 5'-phosphate as cofactor.

The enzyme catalyses (2S,6S)-2,6-diaminopimelate + 2-oxoglutarate = (S)-2,3,4,5-tetrahydrodipicolinate + L-glutamate + H2O + H(+). It participates in amino-acid biosynthesis; L-lysine biosynthesis via DAP pathway; LL-2,6-diaminopimelate from (S)-tetrahydrodipicolinate (aminotransferase route): step 1/1. Functionally, involved in the synthesis of meso-diaminopimelate (m-DAP or DL-DAP), required for both lysine and peptidoglycan biosynthesis. Catalyzes the direct conversion of tetrahydrodipicolinate to LL-diaminopimelate. In Chlamydia felis (strain Fe/C-56) (Chlamydophila felis), this protein is LL-diaminopimelate aminotransferase.